Reading from the N-terminus, the 264-residue chain is Small ribosomal subunit protein uS2 (264 aa).

The protein belongs to the universal ribosomal protein uS2 family.

The chain is Small ribosomal subunit protein uS2 from Synechococcus sp. (strain JA-2-3B'a(2-13)) (Cyanobacteria bacterium Yellowstone B-Prime).